Reading from the N-terminus, the 66-residue chain is Large ribosomal subunit protein bL31 (66 aa).

The Zn(2+) site is built by Cys16, Cys18, Cys36, and Cys39.

Belongs to the bacterial ribosomal protein bL31 family. Type A subfamily. Part of the 50S ribosomal subunit. It depends on Zn(2+) as a cofactor.

In terms of biological role, binds the 23S rRNA. The sequence is that of Large ribosomal subunit protein bL31 from Desulforamulus reducens (strain ATCC BAA-1160 / DSM 100696 / MI-1) (Desulfotomaculum reducens).